Consider the following 503-residue polypeptide: Transmembrane protein 184C (503 aa).

7 helical membrane-spanning segments follow: residues Leu-17–Phe-37, Val-48–Leu-68, Ile-83–Tyr-103, Glu-115–Ile-135, Tyr-212–Tyr-232, Val-254–Ile-274, and Ala-287–Ala-307. Disordered regions lie at residues Pro-358 to Gly-391 and Ser-479 to Ser-503. Low complexity predominate over residues Ser-373–Ser-388. The segment covering Pro-494–Ser-503 has biased composition (polar residues).

Belongs to the TMEM184 family.

It is found in the membrane. Functionally, possible tumor suppressor which may play a role in cell growth. This is Transmembrane protein 184C (Tmem184c) from Rattus norvegicus (Rat).